We begin with the raw amino-acid sequence, 233 residues long: MILLKLNSLINIPIYIGSATSYRQKKFINYIYKKYNNKHFFNIFIILKYLSKAYLYLYILSKYNRSLLFLNSSIKNFNLIKSLANLTNNFYINFFYKIDFLFNWIMFKNKLILLKWLKQLYTFYLKYLFNYLPYNLLIKLYYIYINILKKFGGLEYMQKLPKNIFICNSYSNYLYKNLNLKNFLIISIVDINNENTLKNISVRIIGNNKSYLAIKFIFNILLTALLHGSLFNK.

Belongs to the universal ribosomal protein uS2 family.

The protein localises to the plastid. It localises to the apicoplast. The protein is Small ribosomal subunit protein uS2c of Toxoplasma gondii.